The chain runs to 351 residues: Nicotinate-nucleotide--dimethylbenzimidazole phosphoribosyltransferase (351 aa).

Glu317 serves as the catalytic Proton acceptor.

It belongs to the CobT family.

It carries out the reaction 5,6-dimethylbenzimidazole + nicotinate beta-D-ribonucleotide = alpha-ribazole 5'-phosphate + nicotinate + H(+). The protein operates within nucleoside biosynthesis; alpha-ribazole biosynthesis; alpha-ribazole from 5,6-dimethylbenzimidazole: step 1/2. In terms of biological role, catalyzes the synthesis of alpha-ribazole-5'-phosphate from nicotinate mononucleotide (NAMN) and 5,6-dimethylbenzimidazole (DMB). The protein is Nicotinate-nucleotide--dimethylbenzimidazole phosphoribosyltransferase of Pseudomonas putida (strain ATCC 700007 / DSM 6899 / JCM 31910 / BCRC 17059 / LMG 24140 / F1).